Reading from the N-terminus, the 440-residue chain is Transposon Ty1-JR1 Gag polyprotein (440 aa).

Low complexity predominate over residues 1–16; sequence MESQQLSQHSHISHGS. Disordered stretches follow at residues 1-93, 126-173, and 352-440; these read MESQ…MMTQ, PQSQ…RPPP, and GSRN…PGTY. Polar residues-rich tracts occupy residues 48-60 and 127-152; these read TKAN…TPAS and QSQF…GNTF. Positions 153–165 are enriched in low complexity; that stretch reads TDSSSADSDMTST. The tract at residues 299–401 is RNA-binding; that stretch reads NNGIHINNKV…NSKSKTARAH (103 aa). Over residues 402–418 the composition is skewed to low complexity; the sequence is NVSTSNNSPSTDNDSIS. Residue S416 is modified to Phosphoserine. The segment covering 419–428 has biased composition (polar residues); it reads KSTTEPIQLN. Basic and acidic residues predominate over residues 429 to 440; sequence NKHDLHLRPGTY.

As to quaternary structure, homotrimer.

It is found in the cytoplasm. Functionally, capsid protein (CA) is the structural component of the virus-like particle (VLP), forming the shell that encapsulates the retrotransposons dimeric RNA genome. The particles are assembled from trimer-clustered units and there are holes in the capsid shells that allow for the diffusion of macromolecules. CA also has nucleocapsid-like chaperone activity, promoting primer tRNA(i)-Met annealing to the multipartite primer-binding site (PBS), dimerization of Ty1 RNA and initiation of reverse transcription. This is Transposon Ty1-JR1 Gag polyprotein (TY1A-JR1) from Saccharomyces cerevisiae (strain ATCC 204508 / S288c) (Baker's yeast).